The chain runs to 170 residues: Adenine phosphoribosyltransferase (170 aa).

Belongs to the purine/pyrimidine phosphoribosyltransferase family. As to quaternary structure, homodimer.

The protein resides in the cytoplasm. It catalyses the reaction AMP + diphosphate = 5-phospho-alpha-D-ribose 1-diphosphate + adenine. It functions in the pathway purine metabolism; AMP biosynthesis via salvage pathway; AMP from adenine: step 1/1. Its function is as follows. Catalyzes a salvage reaction resulting in the formation of AMP, that is energically less costly than de novo synthesis. This chain is Adenine phosphoribosyltransferase, found in Thermotoga neapolitana (strain ATCC 49049 / DSM 4359 / NBRC 107923 / NS-E).